The primary structure comprises 104 residues: Large ribosomal subunit protein uL24 (104 aa).

It belongs to the universal ribosomal protein uL24 family. Part of the 50S ribosomal subunit.

One of two assembly initiator proteins, it binds directly to the 5'-end of the 23S rRNA, where it nucleates assembly of the 50S subunit. Functionally, one of the proteins that surrounds the polypeptide exit tunnel on the outside of the subunit. This Shewanella denitrificans (strain OS217 / ATCC BAA-1090 / DSM 15013) protein is Large ribosomal subunit protein uL24.